Here is a 107-residue protein sequence, read N- to C-terminus: uncharacterized protein (107 aa).

Positions 34–107 (FASKDKKDEK…SDNQKKDMSY (74 aa)) form a coiled coil.

This is an uncharacterized protein from Dictyostelium discoideum (Social amoeba).